The following is a 122-amino-acid chain: Large ribosomal subunit protein bL12 (122 aa).

The protein belongs to the bacterial ribosomal protein bL12 family. In terms of assembly, homodimer. Part of the ribosomal stalk of the 50S ribosomal subunit. Forms a multimeric L10(L12)X complex, where L10 forms an elongated spine to which 2 to 4 L12 dimers bind in a sequential fashion. Binds GTP-bound translation factors.

Its function is as follows. Forms part of the ribosomal stalk which helps the ribosome interact with GTP-bound translation factors. Is thus essential for accurate translation. The protein is Large ribosomal subunit protein bL12 of Fusobacterium nucleatum subsp. nucleatum (strain ATCC 25586 / DSM 15643 / BCRC 10681 / CIP 101130 / JCM 8532 / KCTC 2640 / LMG 13131 / VPI 4355).